The following is a 508-amino-acid chain: Flagellin (508 aa).

Belongs to the bacterial flagellin family.

The protein resides in the secreted. It localises to the bacterial flagellum. Flagellin is the subunit protein which polymerizes to form the filaments of bacterial flagella. In Salmonella berta, this protein is Flagellin (fliC).